The following is a 237-amino-acid chain: Bax inhibitor 1 (237 aa).

At Met1–Lys29 the chain is on the cytoplasmic side. Residue Lys7 forms a Glycyl lysine isopeptide (Lys-Gly) (interchain with G-Cter in ubiquitin) linkage. Residues Val30–Val50 traverse the membrane as a helical segment. Over Thr51 to His52 the chain is Lumenal. A helical transmembrane segment spans residues Phe53 to Ala73. Residues Thr74–Gly86 lie on the Cytoplasmic side of the membrane. Residues Leu87–Ile107 traverse the membrane as a helical segment. Over Ala108–Ser112 the chain is Lumenal. Residues Ile113–Leu133 traverse the membrane as a helical segment. At Tyr134–Ser139 the chain is on the cytoplasmic side. Residues Tyr140–Gly160 traverse the membrane as a helical segment. Topologically, residues Asn161–Ser166 are lumenal. Residues Ile167–Phe187 form a helical membrane-spanning segment. Over Asp188 to His206 the chain is Cytoplasmic. The segment at residues Cys207–Met227 is an intramembrane region (helical). Residues Asn228–Lys237 lie on the Cytoplasmic side of the membrane.

The protein belongs to the BI1 family. Interacts with BCL2 and BCL2L1. Interacts with ERN1. Ubiquitinated by BFAR, leading to proteasomal degradation. In terms of tissue distribution, highly abundant in testis.

It localises to the endoplasmic reticulum membrane. Its function is as follows. Endoplasmic reticulum (ER)-resident protein that confers cellular protection as an anti-apoptotic protein by limiting multiple stress-inducing pathways surrounding the endoplasmic reticulum and mitochondria. Inhibits the activities of the key sensor for the endoplasmic reticulum unfolded protein response IRE1alpha/ERN1 both directly and by blocking BAX/BAK binding. Modulates ER calcium homeostasis by acting as a calcium-leak channel. Negatively regulates autophagy and autophagosome formation, especially during periods of nutrient deprivation, and reduces cell survival during starvation. The chain is Bax inhibitor 1 (TMBIM6) from Homo sapiens (Human).